The chain runs to 136 residues: Nucleoside diphosphate kinase (136 aa).

6 residues coordinate ATP: K10, F58, R86, T92, R104, and N114. H117 functions as the Pros-phosphohistidine intermediate in the catalytic mechanism.

The protein belongs to the NDK family. As to quaternary structure, homotetramer. Requires Mg(2+) as cofactor.

Its subcellular location is the cytoplasm. It carries out the reaction a 2'-deoxyribonucleoside 5'-diphosphate + ATP = a 2'-deoxyribonucleoside 5'-triphosphate + ADP. The enzyme catalyses a ribonucleoside 5'-diphosphate + ATP = a ribonucleoside 5'-triphosphate + ADP. Major role in the synthesis of nucleoside triphosphates other than ATP. The ATP gamma phosphate is transferred to the NDP beta phosphate via a ping-pong mechanism, using a phosphorylated active-site intermediate. This Mycolicibacterium vanbaalenii (strain DSM 7251 / JCM 13017 / BCRC 16820 / KCTC 9966 / NRRL B-24157 / PYR-1) (Mycobacterium vanbaalenii) protein is Nucleoside diphosphate kinase.